The following is a 125-amino-acid chain: Small ribosomal subunit protein uS13 (125 aa).

The tract at residues 92–125 (RRSLPARGQNTQTNARTRKGRRKTVAGKKKAVKK) is disordered. The segment covering 107–125 (RTRKGRRKTVAGKKKAVKK) has biased composition (basic residues).

Belongs to the universal ribosomal protein uS13 family. As to quaternary structure, part of the 30S ribosomal subunit. Forms a loose heterodimer with protein S19. Forms two bridges to the 50S subunit in the 70S ribosome.

Functionally, located at the top of the head of the 30S subunit, it contacts several helices of the 16S rRNA. In the 70S ribosome it contacts the 23S rRNA (bridge B1a) and protein L5 of the 50S subunit (bridge B1b), connecting the 2 subunits; these bridges are implicated in subunit movement. Contacts the tRNAs in the A and P-sites. This Chlorobium phaeobacteroides (strain BS1) protein is Small ribosomal subunit protein uS13.